A 244-amino-acid polypeptide reads, in one-letter code: MKIDLNADLGEGCTSDAELLTLVSSANIACGFHAGDAQTMQACVREAIKNGVAIGAHPSFPDRKNFGRSAMQLPPETVYAQTLYQIGALATITRAQGGVMRHVKPHGMLYNQAAKEAQLADAIARAVYACDPALVLVGLAGSELIRAGKQYGLTTREEVFADRGYQADGSLVPRSQSGALIEDEEQALAQTLEMVQHGRVKSITGEWATVTAQTVCLHGDGEHALAFARRLRSAFAEKGIVVAA.

Belongs to the LamB/PxpA family. As to quaternary structure, forms a complex composed of PxpA, PxpB and PxpC.

It catalyses the reaction 5-oxo-L-proline + ATP + 2 H2O = L-glutamate + ADP + phosphate + H(+). Its function is as follows. Catalyzes the cleavage of 5-oxoproline to form L-glutamate coupled to the hydrolysis of ATP to ADP and inorganic phosphate. The sequence is that of 5-oxoprolinase subunit A from Escherichia coli O157:H7.